The sequence spans 840 residues: Phosphatidylglycerol lysyltransferase (840 aa).

At 1–8 (MTEELKNR) the chain is on the cytoplasmic side. The helical transmembrane segment at 9-29 (LLSILKFVFAAVLFIAVVATL) threads the bilayer. At 30–52 (YHELAHINFKQTLEAFSKINRWY) the chain is on the extracellular side. The helical transmembrane segment at 53–73 (LVGLFICGGSAMILLSLYDLI) threads the bilayer. Residues 74–89 (LVKGLKLDIPLIRVFK) are Cytoplasmic-facing. The helical transmembrane segment at 90–110 (ISYIINALNAIVGFGGFIGAG) threads the bilayer. The Extracellular portion of the chain corresponds to 111-129 (FRAFIYKNYTTDRKKLVHA). The helical transmembrane segment at 130–150 (ISIILISMLMGLSLLSILVVL) threads the bilayer. Topologically, residues 151-167 (HIFDASHIINKVSWVRW) are cytoplasmic. The helical transmembrane segment at 168-188 (ILYVVALFLPLFIAYTMINPI) threads the bilayer. Residues 189 to 193 (DRNNK) are Extracellular-facing. Residues 194–216 (YLGVYCTLVSSFEWLAAATVLYL) form a helical membrane-spanning segment. Topologically, residues 217–229 (STVIVDINIAFTT) are cytoplasmic. Residues 230–250 (VIGIFIIAALSGLVSFIPGGF) form a helical membrane-spanning segment. Residues 251-271 (GAFDLVVLLGLKSLGVPEEKV) lie on the Extracellular side of the membrane. A helical transmembrane segment spans residues 272 to 292 (LLALLLYRFAYYFVPVIIALI). The Cytoplasmic segment spans residues 293-335 (LSTFEFGSSARKYFEESKYFVPARDVTSFLFSYQKDIIAKIPS). The chain crosses the membrane as a helical span at residues 336-356 (FALATLVLITSFVFFINNITI). The Extracellular segment spans residues 357 to 366 (VYDGLYDDHH). The helical transmembrane segment at 367 to 387 (FAYYIMLSVHTSACLLLLINV) threads the bilayer. The Cytoplasmic segment spans residues 388-394 (RGVFKQS). A run of 2 helical transmembrane segments spans residues 395–415 (RRAILFVMISLVLIFSATIYT) and 416–436 (YASLILLSWILLIFILLILAY). Residues 437 to 450 (RRSKVMKRPFRLKR) lie on the Cytoplasmic side of the membrane. Residues 451–471 (LIFTIILSMLVLYVNHFIISE) form a helical membrane-spanning segment. The Extracellular segment spans residues 472–490 (TLYALDIYHIEMDTSLLKY). A helical transmembrane segment spans residues 491-511 (YFWLTILVVVILVGIVAWLLG). Topologically, residues 512–840 (SRYTRPHQLE…LKVMRVIRHK (329 aa)) are cytoplasmic.

Belongs to the LPG synthase family.

Its subcellular location is the cell membrane. It catalyses the reaction L-lysyl-tRNA(Lys) + a 1,2-diacyl-sn-glycero-3-phospho-(1'-sn-glycerol) = a 1,2-diacyl-sn-glycero-3-phospho-1'-(3'-O-L-lysyl)-sn-glycerol + tRNA(Lys). Catalyzes the transfer of a lysyl group from L-lysyl-tRNA(Lys) to membrane-bound phosphatidylglycerol (PG), which produces lysylphosphatidylglycerol (LPG), a major component of the bacterial membrane with a positive net charge. LPG synthesis contributes to bacterial virulence as it is involved in the resistance mechanism against cationic antimicrobial peptides (CAMP) produces by the host's immune system (defensins, cathelicidins) and by the competing microorganisms (bacteriocins). In fact, the modification of anionic phosphatidylglycerol with positively charged L-lysine results in repulsion of the peptides. The sequence is that of Phosphatidylglycerol lysyltransferase (mprF) from Staphylococcus haemolyticus (strain JCSC1435).